A 552-amino-acid chain; its full sequence is Putative phosphate permease MT2339 (552 aa).

The next 13 membrane-spanning stretches (helical) occupy residues 38-58 (WHLS…WWAF), 69-89 (ILVL…GNDV), 107-127 (ALLV…GDVT), 146-166 (DFMN…LFAN), 178-198 (IIGG…QGGA), 213-233 (VSWV…YGVI), 326-346 (VPLV…FKGF), 360-380 (FIIA…AKTL), 389-409 (TFLM…FSHG), 437-457 (AVPA…LWFI), 472-492 (MHPA…MGAT), 493-513 (VLGL…GVGI), and 526-546 (IVLA…VGLV).

Belongs to the inorganic phosphate transporter (PiT) (TC 2.A.20) family.

It localises to the cell membrane. Functionally, potential transporter for phosphate. In Mycobacterium tuberculosis (strain CDC 1551 / Oshkosh), this protein is Putative phosphate permease MT2339.